The primary structure comprises 254 residues: Acetylglutamate kinase (254 aa).

Residues 40 to 41, arginine 62, and asparagine 158 each bind substrate; that span reads GG.

This sequence belongs to the acetylglutamate kinase family. ArgB subfamily.

It is found in the cytoplasm. The enzyme catalyses N-acetyl-L-glutamate + ATP = N-acetyl-L-glutamyl 5-phosphate + ADP. The protein operates within amino-acid biosynthesis; L-arginine biosynthesis; N(2)-acetyl-L-ornithine from L-glutamate: step 2/4. Functionally, catalyzes the ATP-dependent phosphorylation of N-acetyl-L-glutamate. In Chloroflexus aggregans (strain MD-66 / DSM 9485), this protein is Acetylglutamate kinase.